The chain runs to 1188 residues: AT-rich interactive domain-containing protein 5B (1188 aa).

Residue lysine 130 forms a Glycyl lysine isopeptide (Lys-Gly) (interchain with G-Cter in SUMO2) linkage. Residues arginine 251–lysine 278 form a disordered region. Serine 264 carries the phosphoserine modification. A compositionally biased stretch (polar residues) spans phenylalanine 265–cysteine 275. An ARID domain is found at arginine 319–lysine 411. Position 337 is an N6,N6-dimethyllysine (lysine 337). Positions glutamate 413–glutamate 614 are disordered. Basic and acidic residues-rich tracts occupy residues isoleucine 445–threonine 459, serine 470–alanine 484, valine 493–glycine 504, and serine 526–aspartate 535. Residue lysine 446 forms a Glycyl lysine isopeptide (Lys-Gly) (interchain with G-Cter in SUMO2) linkage. Glycyl lysine isopeptide (Lys-Gly) (interchain with G-Cter in SUMO2) cross-links involve residues lysine 494 and lysine 496. Over residues proline 594 to asparagine 609 the composition is skewed to polar residues. Glycyl lysine isopeptide (Lys-Gly) (interchain with G-Cter in SUMO2) cross-links involve residues lysine 767, lysine 774, lysine 803, lysine 810, lysine 893, lysine 916, lysine 920, and lysine 935. The segment at serine 958–proline 978 is disordered. Residues lysine 988, lysine 1000, and lysine 1013 each participate in a glycyl lysine isopeptide (Lys-Gly) (interchain with G-Cter in SUMO2) cross-link. The tract at residues alanine 1030–serine 1066 is disordered. Serine 1032 carries the phosphoserine modification. Residues proline 1036 to glutamate 1048 show a composition bias toward basic and acidic residues. Residues lysine 1055 and lysine 1070 each participate in a glycyl lysine isopeptide (Lys-Gly) (interchain with G-Cter in SUMO2) cross-link. Residue serine 1133 is modified to Phosphoserine.

It belongs to the ARID5B family. Post-translationally, methylation at Lys-337 prevents DNA-binding. Demethylation by PHF2 promotes recruitment of the PHF2-ARID5B complex to promoters. As to expression, widely expressed. Expressed in lung, heart, small intestine, kidney, muscle and brain. Also expressed in spleen, thymus, endocrine organs and in uterus and testis.

It is found in the nucleus. Functionally, transcription coactivator that binds to the 5'-AATA[CT]-3' core sequence and plays a key role in adipogenesis and liver development. Acts by forming a complex with phosphorylated PHF2, which mediates demethylation at Lys-337, leading to target the PHF2-ARID5B complex to target promoters, where PHF2 mediates demethylation of dimethylated 'Lys-9' of histone H3 (H3K9me2), followed by transcription activation of target genes. The PHF2-ARID5B complex acts as a coactivator of HNF4A in liver. Required for adipogenesis: regulates triglyceride metabolism in adipocytes by regulating expression of adipogenic genes. Overexpression leads to induction of smooth muscle marker genes, suggesting that it may also act as a regulator of smooth muscle cell differentiation and proliferation. In Mus musculus (Mouse), this protein is AT-rich interactive domain-containing protein 5B (Arid5b).